The chain runs to 591 residues: Protein misato homolog 1 (591 aa).

The protein belongs to the misato family.

It localises to the mitochondrion outer membrane. Its subcellular location is the cytoplasm. Functionally, involved in the regulation of mitochondrial distribution and morphology. Required for mitochondrial fusion and mitochondrial network formation. This Danio rerio (Zebrafish) protein is Protein misato homolog 1 (msto1).